Reading from the N-terminus, the 276-residue chain is 2-dehydro-3-deoxyphosphooctonate aldolase (276 aa).

Belongs to the KdsA family.

The protein localises to the cytoplasm. The enzyme catalyses D-arabinose 5-phosphate + phosphoenolpyruvate + H2O = 3-deoxy-alpha-D-manno-2-octulosonate-8-phosphate + phosphate. Its pathway is carbohydrate biosynthesis; 3-deoxy-D-manno-octulosonate biosynthesis; 3-deoxy-D-manno-octulosonate from D-ribulose 5-phosphate: step 2/3. It functions in the pathway bacterial outer membrane biogenesis; lipopolysaccharide biosynthesis. The sequence is that of 2-dehydro-3-deoxyphosphooctonate aldolase from Xanthomonas campestris pv. campestris (strain 8004).